The primary structure comprises 502 residues: Lysine--tRNA ligase (502 aa).

Residues glutamate 403 and glutamate 410 each contribute to the Mg(2+) site.

Belongs to the class-II aminoacyl-tRNA synthetase family. In terms of assembly, homodimer. The cofactor is Mg(2+).

It is found in the cytoplasm. The catalysed reaction is tRNA(Lys) + L-lysine + ATP = L-lysyl-tRNA(Lys) + AMP + diphosphate. This Parasynechococcus marenigrum (strain WH8102) protein is Lysine--tRNA ligase.